The primary structure comprises 195 residues: Probable GTP-binding protein EngB (195 aa).

Positions 22–195 (GRPEVALAGR…WAALLPFVAS (174 aa)) constitute an EngB-type G domain. GTP contacts are provided by residues 30-37 (GRSNVGKS), 57-61 (GKTQT), 75-78 (DVPG), 142-145 (TKAD), and 174-176 (FSA). Mg(2+) contacts are provided by serine 37 and threonine 59.

Belongs to the TRAFAC class TrmE-Era-EngA-EngB-Septin-like GTPase superfamily. EngB GTPase family. The cofactor is Mg(2+).

Necessary for normal cell division and for the maintenance of normal septation. The polypeptide is Probable GTP-binding protein EngB (Geobacillus kaustophilus (strain HTA426)).